The following is a 36-amino-acid chain: Lambda-hexatoxin-Hv1a (36 aa).

Cystine bridges form between C3/C17, C10/C22, C13/C14, and C16/C33.

Belongs to the neurotoxin 11 (kappa toxin) family. In terms of tissue distribution, expressed by the venom gland.

It is found in the secreted. This excitatory toxin inhibits insect calcium-activated potassium (KCa) channels (Slo-type). The chain is Lambda-hexatoxin-Hv1a from Hadronyche versuta (Blue mountains funnel-web spider).